Here is a 97-residue protein sequence, read N- to C-terminus: MSKITAKDVRKVAQLARLDLPDDQIATYTEQLERILAYVAQLEEIDTTNVKPTTRAVEVVNVTRTDEVSETPVREELLNLAPQREGDFFRVPKILAE.

It belongs to the GatC family. In terms of assembly, heterotrimer of A, B and C subunits.

The catalysed reaction is L-glutamyl-tRNA(Gln) + L-glutamine + ATP + H2O = L-glutaminyl-tRNA(Gln) + L-glutamate + ADP + phosphate + H(+). It carries out the reaction L-aspartyl-tRNA(Asn) + L-glutamine + ATP + H2O = L-asparaginyl-tRNA(Asn) + L-glutamate + ADP + phosphate + 2 H(+). Allows the formation of correctly charged Asn-tRNA(Asn) or Gln-tRNA(Gln) through the transamidation of misacylated Asp-tRNA(Asn) or Glu-tRNA(Gln) in organisms which lack either or both of asparaginyl-tRNA or glutaminyl-tRNA synthetases. The reaction takes place in the presence of glutamine and ATP through an activated phospho-Asp-tRNA(Asn) or phospho-Glu-tRNA(Gln). This is Aspartyl/glutamyl-tRNA(Asn/Gln) amidotransferase subunit C from Prochlorococcus marinus (strain MIT 9313).